Reading from the N-terminus, the 301-residue chain is ATP synthase gamma chain (301 aa).

It belongs to the ATPase gamma chain family. As to quaternary structure, F-type ATPases have 2 components, CF(1) - the catalytic core - and CF(0) - the membrane proton channel. CF(1) has five subunits: alpha(3), beta(3), gamma(1), delta(1), epsilon(1). CF(0) has three main subunits: a, b and c.

The protein resides in the cell inner membrane. Functionally, produces ATP from ADP in the presence of a proton gradient across the membrane. The gamma chain is believed to be important in regulating ATPase activity and the flow of protons through the CF(0) complex. The polypeptide is ATP synthase gamma chain (Helicobacter acinonychis (strain Sheeba)).